A 122-amino-acid chain; its full sequence is Large ribosomal subunit protein uL14 (122 aa).

Belongs to the universal ribosomal protein uL14 family. As to quaternary structure, part of the 50S ribosomal subunit. Forms a cluster with proteins L3 and L19. In the 70S ribosome, L14 and L19 interact and together make contacts with the 16S rRNA in bridges B5 and B8.

Binds to 23S rRNA. Forms part of two intersubunit bridges in the 70S ribosome. The polypeptide is Large ribosomal subunit protein uL14 (Orientia tsutsugamushi (strain Boryong) (Rickettsia tsutsugamushi)).